The sequence spans 291 residues: F-box/kelch-repeat protein At5g38670 (291 aa).

Positions 5–51 (TNPNPSLPDDLILSCVARVSRLYYPALSLVSKSFRSLIASPELYKTR) constitute an F-box domain. 4 Kelch repeats span residues 46–91 (ELYK…VLDE), 92–140 (KIYV…RFDG), 142–187 (LHLV…WYTI), and 189–232 (KGDI…YGGK).

This is F-box/kelch-repeat protein At5g38670 from Arabidopsis thaliana (Mouse-ear cress).